We begin with the raw amino-acid sequence, 104 residues long: Replication restart protein PriB (104 aa).

Residues 1–101 (MTNRLELSGI…LHAEQIELID (101 aa)) form the SSB domain.

The protein belongs to the PriB family. As to quaternary structure, homodimer. Interacts with DnaT. Interacts with PriA. Component of the replication restart primosome. Primosome assembly occurs via a 'hand-off' mechanism. PriA binds to replication forks, subsequently PriB then DnaT bind; DnaT then displaces ssDNA to generate the helicase loading substrate.

Involved in the restart of stalled replication forks, which reloads the replicative helicase on sites far from the origin of replication; the PriA-PriB pathway is the major replication restart pathway. During primosome assembly it facilitates complex formation between PriA and DnaT on DNA; stabilizes PriA on DNA. Stimulates the DNA unwinding activity of PriA helicase. Its function is as follows. Binds single-stranded (ss)DNA at the primosome assembly site (PAS). One study finds it binds 15 nucleotide (nt) ssDNA. Another study finds the minimal ssDNA length for binding to PriB is 25 nt; prefers dT(30) over dA(30). Also binds 22 nt dsDNA. This chain is Replication restart protein PriB, found in Klebsiella pneumoniae subsp. pneumoniae (strain ATCC 700721 / MGH 78578).